We begin with the raw amino-acid sequence, 41 residues long: MKIKNSLKSLKARHRDNRLVRRKGRIYIINKLNPRYKARQG.

It belongs to the bacterial ribosomal protein bL36 family.

The protein is Large ribosomal subunit protein bL36 of Rhizobium etli (strain CIAT 652).